The primary structure comprises 292 residues: Acetylglutamate kinase (292 aa).

Substrate is bound by residues 64–65, Arg86, and Asn190; that span reads GG.

The protein belongs to the acetylglutamate kinase family. ArgB subfamily.

The protein resides in the cytoplasm. The catalysed reaction is N-acetyl-L-glutamate + ATP = N-acetyl-L-glutamyl 5-phosphate + ADP. It functions in the pathway amino-acid biosynthesis; L-arginine biosynthesis; N(2)-acetyl-L-ornithine from L-glutamate: step 2/4. In terms of biological role, catalyzes the ATP-dependent phosphorylation of N-acetyl-L-glutamate. This Geobacter sulfurreducens (strain ATCC 51573 / DSM 12127 / PCA) protein is Acetylglutamate kinase.